The following is a 338-amino-acid chain: Taste receptor type 2 member 39 (338 aa).

Residues 1 to 30 are Extracellular-facing; that stretch reads MLGRCFPPNTKEKQQLRMIKLCDPAESELS. The helical transmembrane segment at 31 to 51 threads the bilayer; it reads PFLITLTLAVLLAEYLTGIIA. Residues 52–74 lie on the Cytoplasmic side of the membrane; that stretch reads NGFITAIHAAEWVQNKSVSTSGR. The chain crosses the membrane as a helical span at residues 75–95; that stretch reads ILVFLSVSRIALQSLMMLEIT. Residues 96 to 116 are Extracellular-facing; it reads ISSTSLSFYSEDAVYYAFKIS. Residues 117 to 137 traverse the membrane as a helical segment; the sequence is FIFLNFCSLWFAAWLSFFYFV. The Cytoplasmic segment spans residues 138 to 156; the sequence is KIANFSYPLFLKLRWRISG. Residues 157–177 traverse the membrane as a helical segment; that stretch reads LIPWLLWLSVFISFSHSMFCI. Over 178-205 the chain is Extracellular; the sequence is NICTGYCDNSFPIHSSNSTEKTYFSEIS. N-linked (GlcNAc...) asparagine glycosylation is present at Asn-194. A helical membrane pass occupies residues 206–226; sequence VVSLAFFFNLGIVIPLIMFIL. Residues 227–262 are Cytoplasmic-facing; the sequence is AAILLILSLKRHTLHMGSNATGSKDPSMEAHIGAIK. Residues 263 to 283 form a helical membrane-spanning segment; sequence ATSYFLILYIFNAVALFIYLS. Topologically, residues 284 to 291 are extracellular; the sequence is NMFDINSL. A helical transmembrane segment spans residues 292–312; that stretch reads WNTLCQIIMAAYPASHSILLI. Topologically, residues 313–338 are cytoplasmic; that stretch reads KDNPGLRRAWKQLQHRLHLYPKQWTL.

This sequence belongs to the G-protein coupled receptor T2R family.

The protein resides in the membrane. Its function is as follows. Receptor that may play a role in the perception of bitterness and is gustducin-linked. May play a role in sensing the chemical composition of the gastrointestinal content. The activity of this receptor may stimulate alpha gustducin, mediate PLC-beta-2 activation and lead to the gating of TRPM5. This Macaca mulatta (Rhesus macaque) protein is Taste receptor type 2 member 39 (TAS2R39).